Here is a 524-residue protein sequence, read N- to C-terminus: ORC1-type DNA replication protein 4 (524 aa).

Residues 1 to 23 (MTDKSNNPAPASDPSTTETSNDA) show a composition bias toward polar residues. The tract at residues 1-67 (MTDKSNNPAP…DDPSDEASRG (67 aa)) is disordered. ATP-binding positions include 128-132 (TGKTA), Tyr325, and Arg337.

Belongs to the CDC6/cdc18 family.

Involved in regulation of DNA replication. The protein is ORC1-type DNA replication protein 4 (cdc6d) of Haloarcula marismortui (strain ATCC 43049 / DSM 3752 / JCM 8966 / VKM B-1809) (Halobacterium marismortui).